A 291-amino-acid polypeptide reads, in one-letter code: Acetylglutamate kinase (291 aa).

Residues 64 to 65 (GG), Arg-86, and Asn-190 contribute to the substrate site.

It belongs to the acetylglutamate kinase family. ArgB subfamily.

The protein resides in the cytoplasm. It catalyses the reaction N-acetyl-L-glutamate + ATP = N-acetyl-L-glutamyl 5-phosphate + ADP. It participates in amino-acid biosynthesis; L-arginine biosynthesis; N(2)-acetyl-L-ornithine from L-glutamate: step 2/4. In terms of biological role, catalyzes the ATP-dependent phosphorylation of N-acetyl-L-glutamate. This is Acetylglutamate kinase from Leptospira borgpetersenii serovar Hardjo-bovis (strain L550).